A 54-amino-acid chain; its full sequence is Apelin receptor early endogenous ligand (54 aa).

An N-terminal signal peptide occupies residues 1 to 22 (MRFQQFLFAFFIFIMSLLLISG). The N-linked (GlcNAc...) asparagine glycan is linked to N27.

This sequence belongs to the Elabela/Toddler family. In terms of assembly, interacts with APLNR. Expressed in the intima of blood vessels. Expressed in endothelial cells in blood vessels in the heart and lung. Expressed in cytotrophoblasts and syncytiotrophoblasts of first-trimester placental tissue and term placentas (at protein level). Not detected in smooth muscle cells or cardiomyocytes (at protein level). Expressed in kidney. Expressed in blood vessels. Expressed in embryonic (ESCs) and induced (iPSCs) pluripotent stem cells. Most highly expressed in undifferentiated embryonic stem cell and is rapidly down-regulated during differentiation.

The protein localises to the secreted. The protein resides in the extracellular space. Functionally, peptide hormone that functions as endogenous ligand for the G-protein-coupled apelin receptor (APLNR/APJ), that plays a role in the regulation of normal cardiovascular function and fluid homeostasis. Functions as a balanced agonist activating both G(i) protein pathway and beta-arrestin pathway of APLNR. Downstream G proteins activation, apelin can inhibit cAMP production and activate key intracellular effectors such as ERKs. On the other hand, APLNR activation induces beta-arrestin recruitment to the membrane leading to desensitization and internalization of the receptor. Required for mesendodermal differentiation, blood vessels formation and heart morphogenesis during early development and for adult cardiovascular homeostasis. Acts as a motogen by promoting mesendodermal cell migration during gastrulation by binding and activating APLNR. Acts as an early embryonic regulator of cellular movement with a role in migration and development of cardiac progenitor cells. May act as a chemoattractant for the activation of angioblast migration toward the embryonic midline, i.e. the position of the future vessel formation, during vasculogenesis. Positively regulates sinus venosus (SV)-derived endothelial cells migration into the developing heart to promote coronary blood vessel sprouting. Plays a role in placental vascular development; promotes placental trophoblast invasion and spiral artery remodeling in the uterus. Involved in the regulation of maternal cardiovascular homeostasis to prevent gestational hypertension and for potent cardioprotective functions during heart failure. Mediates myocardial contractility in an ERK1/2-dependent manner. The polypeptide is Apelin receptor early endogenous ligand (Homo sapiens (Human)).